The sequence spans 452 residues: GTPase Der (452 aa).

EngA-type G domains follow at residues 9 to 170 and 185 to 362; these read KIIA…PEED and LQIV…KTWN. Residues 15–22, 62–66, 124–127, 191–198, 238–242, and 303–306 contribute to the GTP site; these read GRPNVGKS, DTPGF, NKCE, GRPNAGKS, DTAGL, and NKWD. Positions 363 to 448 constitute a KH-like domain; sequence KKITTSKLNE…PIRFNYIKTK (86 aa).

The protein belongs to the TRAFAC class TrmE-Era-EngA-EngB-Septin-like GTPase superfamily. EngA (Der) GTPase family. Associates with the 50S ribosomal subunit.

Functionally, GTPase that plays an essential role in the late steps of ribosome biogenesis. The chain is GTPase Der from Rickettsia bellii (strain OSU 85-389).